An 882-amino-acid polypeptide reads, in one-letter code: Ubiquitin carboxyl-terminal hydrolase 4 (882 aa).

Residues 182-308 (YDSSLLLIDV…WVSKKGACET (127 aa)) form the Rhodanese domain. A compositionally biased stretch (low complexity) spans 382-399 (KAKSSSTSSVTSSSPAPS). The segment at 382-411 (KAKSSSTSSVTSSSPAPSQLVRPQTSSMPP) is disordered. The span at 402 to 411 (VRPQTSSMPP) shows a compositional bias: polar residues. The USP domain occupies 519–879 (VGLENMGNSC…NAYVLFYHRV (361 aa)). The active-site Nucleophile is Cys528. The active-site Proton acceptor is the His836.

The protein belongs to the peptidase C19 family.

Its subcellular location is the cytoplasm. The protein resides in the late endosome membrane. The catalysed reaction is Thiol-dependent hydrolysis of ester, thioester, amide, peptide and isopeptide bonds formed by the C-terminal Gly of ubiquitin (a 76-residue protein attached to proteins as an intracellular targeting signal).. RFU1 is an inhibitor of deubiquitination activity. Functionally, ubiquitin thioesterase that acts at the late endosome/prevacuolar compartment to recover ubiquitin from ubiquitinated membrane proteins en route to the vacuole. Also removes ubiquitin from soluble proteins targeted to proteasomes. Is essential to maintain a normal level of free ubiquitin. Required for promoting coordination of DNA replication and avoids DNA overreplication. The sequence is that of Ubiquitin carboxyl-terminal hydrolase 4 (DOA4) from Vanderwaltozyma polyspora (strain ATCC 22028 / DSM 70294 / BCRC 21397 / CBS 2163 / NBRC 10782 / NRRL Y-8283 / UCD 57-17) (Kluyveromyces polysporus).